The chain runs to 311 residues: Dermonecrotic toxin (311 aa).

An N-terminal signal peptide occupies residues 1–21 (MYVHLALILGCWTVVLQGAET). Positions 22 to 26 (DVGER) are excised as a propeptide. Residue His-38 is part of the active site. Glu-58 and Asp-60 together coordinate Mg(2+). His-73 functions as the Nucleophile in the catalytic mechanism. Cys-77 and Cys-83 are disulfide-bonded. Mg(2+) is bound at residue Asp-117.

The protein belongs to the arthropod phospholipase D family. Class I subfamily. Requires Mg(2+) as cofactor. As to expression, expressed by the venom gland.

It localises to the secreted. It carries out the reaction an N-(acyl)-sphingosylphosphocholine = an N-(acyl)-sphingosyl-1,3-cyclic phosphate + choline. The catalysed reaction is an N-(acyl)-sphingosylphosphoethanolamine = an N-(acyl)-sphingosyl-1,3-cyclic phosphate + ethanolamine. It catalyses the reaction a 1-acyl-sn-glycero-3-phosphocholine = a 1-acyl-sn-glycero-2,3-cyclic phosphate + choline. The enzyme catalyses a 1-acyl-sn-glycero-3-phosphoethanolamine = a 1-acyl-sn-glycero-2,3-cyclic phosphate + ethanolamine. Its activity is regulated as follows. Catalytic activity and hemolysis are inhibited by divalent ion chelators (1,10-phenanthroline, EDTA, and EGTA). Dermonecrotic toxins cleave the phosphodiester linkage between the phosphate and headgroup of certain phospholipids (sphingolipid and lysolipid substrates), forming an alcohol (often choline) and a cyclic phosphate. This toxin acts on sphingomyelin (SM). It may also act on ceramide phosphoethanolamine (CPE), lysophosphatidylcholine (LPC) and lysophosphatidylethanolamine (LPE), but not on lysophosphatidylserine (LPS), and lysophosphatidylglycerol (LPG). It acts by transphosphatidylation, releasing exclusively cyclic phosphate products as second products. Shows complement-dependent hemolysis. Also induces dermonecrosis, vascular permeability, edema, inflammatory response, and platelet aggregation. The protein is Dermonecrotic toxin of Loxosceles laeta (South American recluse spider).